Reading from the N-terminus, the 598-residue chain is Aspartate--tRNA(Asp/Asn) ligase (598 aa).

Residue Glu177 participates in L-aspartate binding. The tract at residues 201–204 (QLFK) is aspartate. Arg223 is an L-aspartate binding site. Residues 223 to 225 (RDE) and Gln232 each bind ATP. His456 lines the L-aspartate pocket. An ATP-binding site is contributed by Glu493. Arg500 contacts L-aspartate. 545–548 (GLDR) provides a ligand contact to ATP.

Belongs to the class-II aminoacyl-tRNA synthetase family. Type 1 subfamily. In terms of assembly, homodimer.

It localises to the cytoplasm. The catalysed reaction is tRNA(Asx) + L-aspartate + ATP = L-aspartyl-tRNA(Asx) + AMP + diphosphate. Its function is as follows. Aspartyl-tRNA synthetase with relaxed tRNA specificity since it is able to aspartylate not only its cognate tRNA(Asp) but also tRNA(Asn). Reaction proceeds in two steps: L-aspartate is first activated by ATP to form Asp-AMP and then transferred to the acceptor end of tRNA(Asp/Asn). This Prochlorococcus marinus (strain MIT 9215) protein is Aspartate--tRNA(Asp/Asn) ligase.